The sequence spans 69 residues: Large ribosomal subunit protein uL29 (69 aa).

This sequence belongs to the universal ribosomal protein uL29 family.

The polypeptide is Large ribosomal subunit protein uL29 (Staphylococcus saprophyticus subsp. saprophyticus (strain ATCC 15305 / DSM 20229 / NCIMB 8711 / NCTC 7292 / S-41)).